We begin with the raw amino-acid sequence, 765 residues long: Kinesin-like protein KIN-14S (765 aa).

Positions 132–456 constitute a Kinesin motor domain; sequence NIRVFCRCRP…LNFASRVRGI (325 aa). Position 215 to 222 (215 to 222) interacts with ATP; the sequence is GQTGTGKT. Positions 469 to 534 form a coiled coil; the sequence is ELLKSKQMAE…ERKTRIKQES (66 aa). Disordered regions lie at residues 581–613 and 654–678; these read MPQQ…SSMD and LRPE…RGDP. Residues 602 to 611 show a composition bias toward low complexity; sequence NNNSNRRSSS.

Belongs to the TRAFAC class myosin-kinesin ATPase superfamily. Kinesin family. KIN-14 subfamily.

The protein is Kinesin-like protein KIN-14S of Arabidopsis thaliana (Mouse-ear cress).